Reading from the N-terminus, the 61-residue chain is Sperm protamine P1 (61 aa).

The tract at residues 1–61 (MARYRHSRSR…RRYSRRRRRY (61 aa)) is disordered.

Belongs to the protamine P1 family. As to expression, testis.

The protein localises to the nucleus. Its subcellular location is the chromosome. Its function is as follows. Protamines substitute for histones in the chromatin of sperm during the haploid phase of spermatogenesis. They compact sperm DNA into a highly condensed, stable and inactive complex. This Potorous longipes (Long-footed potoroo) protein is Sperm protamine P1 (PRM1).